The primary structure comprises 292 residues: General transcription factor IIE subunit 2 (292 aa).

At M1 the chain carries N-acetylmethionine. The interval 17-64 (LSTPVVEKRAVPSESPSSSSSKKKKAKVEHGGSSGSKQNSDHNNGSFN) is disordered. Residues 51-63 (GSKQNSDHNNGSF) are compositionally biased toward polar residues. Residue S62 is modified to Phosphoserine. A DNA-binding region (TFIIE beta) is located at residues 67-147 (ALSGSSGYKF…YAFKPKYNLK (81 aa)). K75 bears the N6-acetyllysine mark. A disordered region spans residues 245–277 (SMQESGPKKVASIQRRKKPASQKKRRFKTHNEH). The span at 258 to 272 (QRRKKPASQKKRRFK) shows a compositional bias: basic residues.

Belongs to the TFIIE beta subunit family. As to quaternary structure, tetramer of two alpha and two beta chains. Interacts with FACT subunit SUPT16H. Interacts with ATF7IP. Interacts with SND1. Part of TBP-based Pol II pre-initiation complex (PIC), in which Pol II core assembles with general transcription factors and other specific initiation factors including GTF2E1, GTF2E2, GTF2F1, GTF2F2, TCEA1, ERCC2, ERCC3, GTF2H2, GTF2H3, GTF2H4, GTF2H5, GTF2A1, GTF2A2, GTF2B and TBP; this large multi-subunit PIC complex mediates DNA unwinding and targets Pol II core to the transcription start site where the first phosphodiester bond forms.

It localises to the nucleus. Its function is as follows. Recruits TFIIH to the initiation complex and stimulates the RNA polymerase II C-terminal domain kinase and DNA-dependent ATPase activities of TFIIH. Both TFIIH and TFIIE are required for promoter clearance by RNA polymerase. The sequence is that of General transcription factor IIE subunit 2 (Gtf2e2) from Mus musculus (Mouse).